The chain runs to 282 residues: RIO-type serine/threonine-protein kinase Rio2 (282 aa).

The Protein kinase domain occupies 92-282; sequence DAIGKLMGEG…NSAIDRILQE (191 aa). ATP-binding positions include 98–106, Lys-120, and His-126; that span reads MGEGKESAV. Glu-103 is a binding site for Mg(2+). Ser-128 is subject to Phosphoserine; by autocatalysis. 180 to 186 contacts ATP; sequence ELIDAKE. The active-site Proton acceptor is Asp-218. 3 residues coordinate ATP: Tyr-222, Asn-223, and Asp-235. Residues Asn-223 and Asp-235 each coordinate Mg(2+).

Belongs to the protein kinase superfamily. RIO-type Ser/Thr kinase family. As to quaternary structure, monomer. Requires Mg(2+) as cofactor. Mn(2+) is required as a cofactor. In terms of processing, autophosphorylated.

It carries out the reaction L-seryl-[protein] + ATP = O-phospho-L-seryl-[protein] + ADP + H(+). It catalyses the reaction L-threonyl-[protein] + ATP = O-phospho-L-threonyl-[protein] + ADP + H(+). This Archaeoglobus fulgidus (strain ATCC 49558 / DSM 4304 / JCM 9628 / NBRC 100126 / VC-16) protein is RIO-type serine/threonine-protein kinase Rio2 (rio2).